The chain runs to 558 residues: Potassium-transporting ATPase potassium-binding subunit (558 aa).

Helical transmembrane passes span 1–21 (MEII…SGYL), 66–86 (FNGF…WLFL), 127–147 (MIVM…VCIA), 166–186 (IVRF…ILLM), 245–265 (IWSD…MLFL), 281–301 (ALIL…LTMW), 327–347 (FGAG…TGSV), 354–374 (LTPL…VFGG), 377–397 (VGLM…SLMV), 416–436 (IVLV…LAFM), 482–502 (ISTG…QLLI), and 531–551 (IVFI…LGPI).

This sequence belongs to the KdpA family. As to quaternary structure, the system is composed of three essential subunits: KdpA, KdpB and KdpC.

It localises to the cell membrane. Its function is as follows. Part of the high-affinity ATP-driven potassium transport (or Kdp) system, which catalyzes the hydrolysis of ATP coupled with the electrogenic transport of potassium into the cytoplasm. This subunit binds the extracellular potassium ions and delivers the ions to the membrane domain of KdpB through an intramembrane tunnel. This chain is Potassium-transporting ATPase potassium-binding subunit, found in Staphylococcus aureus (strain bovine RF122 / ET3-1).